The following is a 346-amino-acid chain: MVQASGHRRSTRGSKMVSWSVIAKIQEIWCEEDERKMVREFLAEFMSTYVMMVFGLGSVAHMVLNKTYGSYLGVNLGFGFGVTMGVHVAGRISGAHMNAAVTFTNCALGRVPWRKFPVHVLGQFLGSFLAAATIYSLFYTAILHFSGGELMVTGPFATAGIFATYLPDHMTLWRGFLNEEWLTRMLQLCLFTITDQENNPALPGTHALVISILVVIIRVSHGINTGYAINPSRDPPPSIFTFIAGWGKQVFSDGENWWWVPVVAPLLGASLGGIIYLVFIGSTIPREPLKLEDSVAYEDHGITVLPKMGSHEPMISPLTLISVSLANRSSVHSAPPLHESMALEHF.

Residues M1–E40 lie on the Cytoplasmic side of the membrane. A helical transmembrane segment spans residues F41 to S58. Topologically, residues V59–Y71 are extracellular. A helical transmembrane segment spans residues L72 to A89. Residues G90–S93 lie on the Cytoplasmic side of the membrane. The discontinuously helical intramembrane region spans G94–A107. The short motif at N98–A100 is the NPA 1 element. The Cytoplasmic portion of the chain corresponds to L108–K115. The helical transmembrane segment at F116–S136 threads the bilayer. Residues L137–R174 lie on the Extracellular side of the membrane. The helical transmembrane segment at G175 to T192 threads the bilayer. Residues I193 to G204 lie on the Cytoplasmic side of the membrane. The helical transmembrane segment at T205–H221 threads the bilayer. The Extracellular segment spans residues G222 to T225. An intramembrane region (discontinuously helical) is located at residues G226 to I239. Positions N230–S232 match the NPA 2 motif. The Extracellular portion of the chain corresponds to F240–W257. Residues W258–F279 traverse the membrane as a helical segment. Residues I280–F346 lie on the Cytoplasmic side of the membrane.

It belongs to the MIP/aquaporin (TC 1.A.8) family. As to quaternary structure, homotetramer; each monomer provides an independent glycerol/water pore.

The protein localises to the membrane. The enzyme catalyses glycerol(in) = glycerol(out). The catalysed reaction is H2O(in) = H2O(out). Its function is as follows. Aquaglyceroporins form homotetrameric transmembrane channels, with each monomer independently mediating glycerol and water transport across the plasma membrane along their osmotic gradient. In Homo sapiens (Human), this protein is Putative aquaporin-7B.